Consider the following 807-residue polypeptide: Ribosomal RNA large subunit methyltransferase K/L (807 aa).

Residues 67 to 182 (QIYKICLWSR…EKQAEIFLDL (116 aa)) enclose the THUMP domain. A compositionally biased stretch (polar residues) spans 548 to 560 (NTQYGNPEASAQS). A disordered region spans residues 548 to 602 (NTQYGNPEASAQSKESKNAPEPKKDNRNRYKGNKFQQAREEAKRQEAQRLAQKKR). Composition is skewed to basic and acidic residues over residues 561-575 (KESK…DNRN) and 584-594 (QAREEAKRQEA).

The protein belongs to the methyltransferase superfamily. RlmKL family.

It localises to the cytoplasm. It carries out the reaction guanosine(2445) in 23S rRNA + S-adenosyl-L-methionine = N(2)-methylguanosine(2445) in 23S rRNA + S-adenosyl-L-homocysteine + H(+). The catalysed reaction is guanosine(2069) in 23S rRNA + S-adenosyl-L-methionine = N(2)-methylguanosine(2069) in 23S rRNA + S-adenosyl-L-homocysteine + H(+). Functionally, specifically methylates the guanine in position 2445 (m2G2445) and the guanine in position 2069 (m7G2069) of 23S rRNA. This chain is Ribosomal RNA large subunit methyltransferase K/L, found in Psychrobacter sp. (strain PRwf-1).